Reading from the N-terminus, the 585-residue chain is MPVLSEDSGLHETLALLTSQLRPDSNHREEMGFLRDVFSEKSLGYLMKIHEKLRYYERQSPTPVLHSAMALAEDVMEELQAASVHSDERELLQLLSTPHLRAVLMVHDTVAQKNFDPVLPPLPDNIDEDFEEESVKIVRLVKNKEPLGATIRRDEHSGAVVVARIMRGGAADRSGLVHVGDELREVNGITVLHKRPDEISQILAQSQGSITLKIIPATQEEDRFKESKVFMRALFHYDPREDRAIPCQEAGLPFQQRQVLEVVSQDDPTWWQAKRVGDTNLRAGLIPSKQFQERRLSYRRTTGTIPSPQNLRKPLYDQPCDKETCDCDGYFKGHYVAGLRRSFRLGCRERLTGSQEVKVPVGAESQVLLTYEEVARYQHQPGERSRLVVLIGSLGAHLHELKQRVVAEDPQHFGVAVPHTTRPRKSHEREGVEYHFVSKQAFEADIQHNKFLEHGEHKENLYGTSLEAIQTVMAKNKVCLVDVEPEALRHLRTPEFKPYVIFVKPAIQEKRKTPPVSPDSEDPATPLDEQQQEMAASAAFIDQHYGHLIDTVLVRQDLQSVCSQLRAVIESLSKDTYWVPISWVR.

2 consecutive L27 domains span residues 6 to 60 (EDSG…ERQS) and 61 to 118 (PTPV…FDPV). The PDZ domain maps to 137 to 218 (IVRLVKNKEP…SITLKIIPAT (82 aa)). The SH3 domain occupies 226-296 (ESKVFMRALF…PSKQFQERRL (71 aa)). Serine 307 carries the phosphoserine modification. In terms of domain architecture, Guanylate kinase-like spans 385 to 570 (SRLVVLIGSL…VCSQLRAVIE (186 aa)). The interval 510–530 (KRKTPPVSPDSEDPATPLDEQ) is disordered.

It belongs to the MAGUK family. In terms of assembly, interacts with HTR2C; this interaction stabilizes the receptor at the plasma membrane and prevents the desensitization of the HTR2C receptor-mediated calcium response. Interacts with HTR2A. Interacts with HTR4. Interacts (via PDZ domain) with CADM1 (via C-terminus)Interacts (via PDZ domain) with CADM1; this interaction connects CADM1 with DLG1. Interacts (via Guanylate kinase-like domain) with PALS1. Interacts with DLG1 (via N-terminus); this interaction connects CADM1 with DLG1 and links CADM1 with the regulatory subunit of phosphoinositide-3-kinase (PI3K) by forming a multiprotein complex and participates in cell spreading.

It localises to the apical cell membrane. It is found in the cell membrane. Its subcellular location is the cell junction. The protein resides in the adherens junction. Its function is as follows. Participates in cell spreading through the phosphoinositide-3-kinase (PI3K) pathway by connecting CADM1 to DLG1 and the regulatory subunit of phosphoinositide-3-kinase (PI3K). Stabilizes HTR2C at the plasma membrane and prevents its desensitization. May participates in the maintenance of adherens junctions. This chain is MAGUK p55 subfamily member 3, found in Rattus norvegicus (Rat).